The sequence spans 225 residues: Phosphatidylserine decarboxylase proenzyme (225 aa).

The Schiff-base intermediate with substrate; via pyruvic acid role is filled by serine 195. Serine 195 is modified (pyruvic acid (Ser); by autocatalysis).

The protein belongs to the phosphatidylserine decarboxylase family. PSD-A subfamily. As to quaternary structure, heterodimer of a large membrane-associated beta subunit and a small pyruvoyl-containing alpha subunit. The cofactor is pyruvate. In terms of processing, is synthesized initially as an inactive proenzyme. Formation of the active enzyme involves a self-maturation process in which the active site pyruvoyl group is generated from an internal serine residue via an autocatalytic post-translational modification. Two non-identical subunits are generated from the proenzyme in this reaction, and the pyruvate is formed at the N-terminus of the alpha chain, which is derived from the carboxyl end of the proenzyme. The post-translation cleavage follows an unusual pathway, termed non-hydrolytic serinolysis, in which the side chain hydroxyl group of the serine supplies its oxygen atom to form the C-terminus of the beta chain, while the remainder of the serine residue undergoes an oxidative deamination to produce ammonia and the pyruvoyl prosthetic group on the alpha chain.

Its subcellular location is the cell membrane. It carries out the reaction a 1,2-diacyl-sn-glycero-3-phospho-L-serine + H(+) = a 1,2-diacyl-sn-glycero-3-phosphoethanolamine + CO2. Its pathway is phospholipid metabolism; phosphatidylethanolamine biosynthesis; phosphatidylethanolamine from CDP-diacylglycerol: step 2/2. Catalyzes the formation of phosphatidylethanolamine (PtdEtn) from phosphatidylserine (PtdSer). In Gluconacetobacter diazotrophicus (strain ATCC 49037 / DSM 5601 / CCUG 37298 / CIP 103539 / LMG 7603 / PAl5), this protein is Phosphatidylserine decarboxylase proenzyme.